The following is a 529-amino-acid chain: Neuronal acetylcholine receptor subunit alpha-2 (529 aa).

Residues 1-26 (MGPSCPVFLSFTKLSLWWLLLTPAGG) form the signal peptide. A disordered region spans residues 27-56 (EEAKRPPPRAPGDPLSSPSPTALPQGGSHT). Over 27–264 (EEAKRPPPRA…VTYAFIIRRL (238 aa)) the chain is Extracellular. N-linked (GlcNAc...) asparagine glycans are attached at residues N79 and N129. A disulfide bond links C183 and C197. Residue N235 is glycosylated (N-linked (GlcNAc...) asparagine). A disulfide bridge connects residues C247 and C248. Transmembrane regions (helical) follow at residues 265–289 (PLFYTINLIIPCLLISCLTVLVFYL), 297–315 (ITLCISVLLSLTVFLLLIT), and 331–352 (YLLFTMIFVTLSIVITVFVLNV). Residues 353 to 502 (HHRSPSTHTM…WKYVAMVIDR (150 aa)) lie on the Cytoplasmic side of the membrane. Residues 503-521 (IFLWLFIIVCFLGTIGLFL) traverse the membrane as a helical segment.

It belongs to the ligand-gated ion channel (TC 1.A.9) family. Acetylcholine receptor (TC 1.A.9.1) subfamily. Alpha-2/CHRNA2 sub-subfamily. As to quaternary structure, neuronal AChR is composed of two different types of subunits: alpha and non-alpha (beta). CHRNA2/alpha-2 subunit can be combined to CHRNB2/beta-2 or CHRNB4/beta-4 to give rise to functional receptors. Both CHRNA2:CHRNB2 and CHRNA2:CHRNB4 nAChR complexes are heteropentamers with two subtypes: LS (low agonist sensitivity) with a (CHRNA2)3:(CHRNB2/4)2 and HS (high agonist sensitivity) with a (CHRNA2)2:(CHRNB2/4)3 stoichiometries; the subtypes differ in their subunit binding interfaces which are involved in ligand binding.

The protein resides in the synaptic cell membrane. It localises to the cell membrane. It catalyses the reaction Ca(2+)(in) = Ca(2+)(out). It carries out the reaction K(+)(in) = K(+)(out). The enzyme catalyses Na(+)(in) = Na(+)(out). In terms of biological role, component of neuronal acetylcholine receptors (nAChRs) that function as pentameric, ligand-gated cation channels with high calcium permeability among other activities. nAChRs are excitatory neurotrasnmitter receptors formed by a collection of nAChR subunits known to mediate synaptic transmission in the nervous system and the neuromuscular junction. Each nAchR subunit confers differential attributes to channel properties, including activation, deactivation and desensitization kinetics, pH sensitivity, cation permeability, and binding to allosteric modulators. CHRNA2 forms heteropentameric neuronal acetylcholine receptors with CHRNB2 and CHRNB4 and plays a role in nicotine dependence. This is Neuronal acetylcholine receptor subunit alpha-2 (CHRNA2) from Pan troglodytes (Chimpanzee).